The chain runs to 187 residues: Peptidyl-tRNA hydrolase (187 aa).

His14 contacts tRNA. The Proton acceptor role is filled by His19. The tRNA site is built by Tyr62, Asn64, and Asn110.

Belongs to the PTH family. Monomer.

The protein resides in the cytoplasm. It carries out the reaction an N-acyl-L-alpha-aminoacyl-tRNA + H2O = an N-acyl-L-amino acid + a tRNA + H(+). In terms of biological role, hydrolyzes ribosome-free peptidyl-tRNAs (with 1 or more amino acids incorporated), which drop off the ribosome during protein synthesis, or as a result of ribosome stalling. Functionally, catalyzes the release of premature peptidyl moieties from peptidyl-tRNA molecules trapped in stalled 50S ribosomal subunits, and thus maintains levels of free tRNAs and 50S ribosomes. The polypeptide is Peptidyl-tRNA hydrolase (Chlorobaculum tepidum (strain ATCC 49652 / DSM 12025 / NBRC 103806 / TLS) (Chlorobium tepidum)).